The primary structure comprises 306 residues: Lipid A biosynthesis palmitoleoyltransferase (306 aa).

Residues 20 to 40 (WFGLGVLWLWVQLPYPVLCFL) form a helical membrane-spanning segment. Positions 132–137 (HFMSLE) match the HXXXXD motif motif.

Belongs to the LpxL/LpxM/LpxP family. LpxP subfamily.

It is found in the cell inner membrane. The enzyme catalyses (9Z)-hexadecenoyl-[ACP] + alpha-Kdo-(2-&gt;4)-alpha-Kdo-(2-&gt;6)-lipid IVA (E. coli) = (9Z)-hexadecenoyl-(Kdo)2-lipid IVA (E. coli) + holo-[ACP]. The protein operates within bacterial outer membrane biogenesis; lipopolysaccharide biosynthesis. Its function is as follows. Catalyzes the transfer of palmitoleate from palmitoleoyl-[acyl-carrier-protein] (ACP) to Kdo(2)-lipid IV(A) to form Kdo(2)-(palmitoleoyl)-lipid IV(A). Required for the biosynthesis of a distinct molecular species of lipid A, which is present only in cells grown at low temperatures. It may confer a selective advantage to cells growing at lower temperatures by making the outer membrane a more effective barrier to harmful chemicals. The protein is Lipid A biosynthesis palmitoleoyltransferase of Escherichia coli (strain K12).